The following is a 192-amino-acid chain: Vascular endothelial growth factor A (192 aa).

The N-terminal stretch at 1 to 26 (MNFLLSWIHWGLAALLYFHNAKVLQA) is a signal peptide. 3 cysteine pairs are disulfide-bonded: cysteine 52–cysteine 94, cysteine 83–cysteine 128, and cysteine 87–cysteine 130. A glycan (N-linked (GlcNAc...) asparagine) is linked at asparagine 101.

This sequence belongs to the PDGF/VEGF growth factor family. Homodimer; disulfide-linked. Also found as heterodimer with PGF Interacts with FLT1/VEGFR1 and KDR/VEGFR2 receptors, heparan sulfate and heparin. Expressed by the venom gland, and probably other tissues.

It is found in the secreted. Its function is as follows. Growth factor active in angiogenesis, vasculogenesis and endothelial cell growth. Induces endothelial cell proliferation, promotes cell migration, inhibits apoptosis and induces permeabilization of blood vessels. In Vipera ammodytes ammodytes (Western sand viper), this protein is Vascular endothelial growth factor A.